The chain runs to 246 residues: Mast cell protease 1 (246 aa).

An N-terminal signal peptide occupies residues 1 to 18 (MQALLFLLALLWPPEAGA). Residues 19-20 (EE) constitute a propeptide, activation peptide. The region spanning 21–244 (IIGGVESKPH…YVPWINLVIR (224 aa)) is the Peptidase S1 domain. A disulfide bridge links Cys-50 with Cys-66. Residues His-65 and Asp-109 each act as charge relay system in the active site. Cystine bridges form between Cys-143–Cys-208 and Cys-174–Cys-187. The active-site Charge relay system is the Ser-202.

It belongs to the peptidase S1 family. Granzyme subfamily.

The chain is Mast cell protease 1 from Meriones unguiculatus (Mongolian jird).